The following is a 1382-amino-acid chain: ATP-dependent RNA helicase TDRD9 (1382 aa).

The disordered stretch occupies residues 36–62; the sequence is AAREEVQRQDVAPGAGPAAQAPALAQA. Residues 47–62 are compositionally biased toward low complexity; the sequence is APGAGPAAQAPALAQA. A Helicase ATP-binding domain is found at 142–308; it reads VSLIESNSVV…FAVPVQNKMN (167 aa). Position 155 to 162 (155 to 162) interacts with ATP; sequence GATGSGKS. The short motif at 254 to 257 is the DEAH box element; the sequence is DEVH. Positions 377 to 544 constitute a Helicase C-terminal domain; it reads SGAQFVLERS…ILKVKLLDMG (168 aa). One can recognise a Tudor domain in the interval 944-1004; it reads HPHPDLVCLA…MEIPCQFLEL (61 aa).

The protein belongs to the DEAD box helicase family. DEAH subfamily. As to quaternary structure, interacts with piRNA-associated proteins PIWIL1 and PIWIL4.

It localises to the cytoplasm. Its subcellular location is the nucleus. It carries out the reaction ATP + H2O = ADP + phosphate + H(+). ATP-binding RNA helicase required during spermatogenesis. Required to repress transposable elements and prevent their mobilization, which is essential for the germline integrity. Acts via the piRNA metabolic process, which mediates the repression of transposable elements during meiosis by forming complexes composed of piRNAs and Piwi proteins and governs the methylation and subsequent repression of transposons. Acts downstream of piRNA biogenesis: exclusively required for transposon silencing in the nucleus, suggesting that it acts as a nuclear effector in the nucleus together with PIWIL4. This chain is ATP-dependent RNA helicase TDRD9, found in Homo sapiens (Human).